The following is a 567-amino-acid chain: Laccase-3 (567 aa).

The N-terminal stretch at 1–24 (MASSSSSRLLFLLSCSVLALLAGA) is a signal peptide. Plastocyanin-like domains follow at residues 32–148 (IVQE…PREN) and 158–310 (REVP…YDCG). Asn-78 carries N-linked (GlcNAc...) asparagine glycosylation. Cu cation is bound by residues His-82, His-84, His-127, and His-129. Residues Asn-148, Asn-187, Asn-203, Asn-298, Asn-330, Asn-379, and Asn-389 are each glycosylated (N-linked (GlcNAc...) asparagine). In terms of domain architecture, Plastocyanin-like 3 spans 415 to 551 (DFPAYPPVQF…AMAFLVEDGY (137 aa)). The Cu cation site is built by His-468, His-471, His-473, His-530, Cys-531, His-532, and His-536.

Belongs to the multicopper oxidase family. Cu cation is required as a cofactor.

Its subcellular location is the secreted. It is found in the extracellular space. The protein localises to the apoplast. The catalysed reaction is 4 hydroquinone + O2 = 4 benzosemiquinone + 2 H2O. Lignin degradation and detoxification of lignin-derived products. This Oryza sativa subsp. japonica (Rice) protein is Laccase-3 (LAC3).